The primary structure comprises 459 residues: Putrescine aminotransferase (459 aa).

Residues 150-151 (GT) and Gln-274 contribute to the pyridoxal 5'-phosphate site. N6-(pyridoxal phosphate)lysine is present on Lys-300. Thr-332 lines the pyridoxal 5'-phosphate pocket.

This sequence belongs to the class-III pyridoxal-phosphate-dependent aminotransferase family. Putrescine aminotransferase subfamily. It depends on pyridoxal 5'-phosphate as a cofactor.

The enzyme catalyses an alkane-alpha,omega-diamine + 2-oxoglutarate = an omega-aminoaldehyde + L-glutamate. The catalysed reaction is putrescine + 2-oxoglutarate = 1-pyrroline + L-glutamate + H2O. It catalyses the reaction cadaverine + 2-oxoglutarate = 5-aminopentanal + L-glutamate. The protein operates within amine and polyamine degradation; putrescine degradation; 4-aminobutanal from putrescine (transaminase route): step 1/1. Its function is as follows. Catalyzes the aminotransferase reaction from putrescine to 2-oxoglutarate, leading to glutamate and 4-aminobutanal, which spontaneously cyclizes to form 1-pyrroline. This is the first step in one of two pathways for putrescine degradation, where putrescine is converted into 4-aminobutanoate (gamma-aminobutyrate or GABA) via 4-aminobutanal. Also functions as a cadaverine transaminase in a a L-lysine degradation pathway to succinate that proceeds via cadaverine, glutarate and L-2-hydroxyglutarate. This is Putrescine aminotransferase from Escherichia coli O6:K15:H31 (strain 536 / UPEC).